A 193-amino-acid polypeptide reads, in one-letter code: Segregation and condensation protein B (193 aa).

The protein belongs to the ScpB family. As to quaternary structure, homodimer. Homodimerization may be required to stabilize the binding of ScpA to the Smc head domains. Component of a cohesin-like complex composed of ScpA, ScpB and the Smc homodimer, in which ScpA and ScpB bind to the head domain of Smc. The presence of the three proteins is required for the association of the complex with DNA.

The protein resides in the cytoplasm. Participates in chromosomal partition during cell division. May act via the formation of a condensin-like complex containing Smc and ScpA that pull DNA away from mid-cell into both cell halves. This Streptococcus thermophilus (strain CNRZ 1066) protein is Segregation and condensation protein B.